Reading from the N-terminus, the 395-residue chain is FAD-dependent urate hydroxylase (395 aa).

FAD-binding positions include glycine 11, 30–31, serine 43, and methionine 125; that span reads ER. Residues asparagine 180, arginine 206, and 218–220 each bind substrate; that span reads YFF. FAD is bound by residues aspartate 287 and 297-301; that span reads GQGGC.

Belongs to the FAD-dependent urate hydroxylase family. In terms of assembly, monomer. It depends on FAD as a cofactor.

It catalyses the reaction urate + NADH + O2 + H(+) = 5-hydroxyisourate + NAD(+) + H2O. It functions in the pathway purine metabolism; urate degradation. Its function is as follows. Catalyzes the hydroxylation of urate to 5-hydroxyisourate (HIU). Is likely to be involved in the urate degradation pathway to allantoin. Prefers NADH over NADPH as the electron donor. The sequence is that of FAD-dependent urate hydroxylase from Mycolicibacterium vanbaalenii (strain DSM 7251 / JCM 13017 / BCRC 16820 / KCTC 9966 / NRRL B-24157 / PYR-1) (Mycobacterium vanbaalenii).